The primary structure comprises 400 residues: Serpin E3 (400 aa).

The N-terminal stretch at 1–19 (MQSLLLALLLLPVCSPGGA) is a signal peptide. Asparagine 46 carries N-linked (GlcNAc...) asparagine glycosylation.

This sequence belongs to the serpin family.

The protein resides in the secreted. Probable serine protease inhibitor. The sequence is that of Serpin E3 (SERPINE3) from Bos taurus (Bovine).